A 111-amino-acid chain; its full sequence is Anti-adapter protein IraM (111 aa).

This sequence belongs to the IraM/RssC family.

It is found in the cytoplasm. Functionally, involved in the stabilization of the sigma stress factor RpoS. The sequence is that of Anti-adapter protein IraM from Cronobacter sakazakii (strain ATCC BAA-894) (Enterobacter sakazakii).